Reading from the N-terminus, the 209-residue chain is C-type lectin domain family 6 member A (209 aa).

The Cytoplasmic portion of the chain corresponds to 1 to 20 (MVQERHPQRKGVCWTLRLWS). Residues 21-43 (TAVISMLLLSTCFIASCMVTYQF) form a helical; Signal-anchor for type II membrane protein membrane-spanning segment. Residues 44–209 (TMEKPNRRLS…SICETKKIYL (166 aa)) are Extracellular-facing. 2 disulfide bridges follow: C64-C78 and C79-C90. The C-type lectin domain maps to 86 to 203 (FGSSCYLIST…CDSKHNSICE (118 aa)). Ca(2+)-binding residues include V116, N118, and E122. The N-linked (GlcNAc...) asparagine glycan is linked to N131. E168, N170, and E174 together coordinate Ca(2+). Alpha-D-mannopyranose-binding positions include 168–170 (EPN), E174, W182, and 190–191 (ND). A disulfide bridge links C176 with C194. Residues N190, D191, and E203 each coordinate Ca(2+).

In terms of assembly, associated with FCER1G. Heterodimer with CLEC4D; this heterodimer forms a pattern recognition receptor (PRR) against fungal infection.

The protein localises to the cell membrane. Calcium-dependent lectin that acts as a pattern recognition receptor (PRR) of the innate immune system: specifically recognizes and binds alpha-mannans on C.albicans hypheas. Binding of C.albicans alpha-mannans to this receptor complex leads to phosphorylation of the immunoreceptor tyrosine-based activation motif (ITAM) of FCER1G, triggering activation of SYK, CARD9 and NF-kappa-B, consequently driving maturation of antigen-presenting cells and shaping antigen-specific priming of T-cells toward effector T-helper 1 and T-helper 17 cell subtypes. Also recognizes, in a mannose-dependent manner, allergens from house dust mite and fungi, by promoting cysteinyl leukotriene production. Recognizes soluble elements from the eggs of Shistosoma mansoni altering adaptive immune responses. This is C-type lectin domain family 6 member A (CLEC6A) from Rattus norvegicus (Rat).